The following is a 224-amino-acid chain: C-&gt;U-editing enzyme APOBEC-2 (224 aa).

The interval 1-23 (MAQKEEAAEAAAPASQNGDDLEN) is disordered. Positions 60 and 98 each coordinate Zn(2+). In terms of domain architecture, CMP/dCMP-type deaminase spans 64–169 (GRNKTFLCYV…PEVQAALKKL (106 aa)). Glu100 functions as the Proton donor in the catalytic mechanism. Residues Cys128 and Cys131 each coordinate Zn(2+).

Belongs to the cytidine and deoxycytidylate deaminase family. Homotetramer. Zn(2+) serves as cofactor. Expressed exclusively in heart and skeletal muscle.

The enzyme catalyses cytidine(6666) in apoB mRNA + H2O + H(+) = uridine(6666) in apoB mRNA + NH4(+). Its function is as follows. Probable C to U editing enzyme whose physiological substrate is not yet known. Does not display detectable apoB mRNA editing. Has a low intrinsic cytidine deaminase activity. May play a role in the epigenetic regulation of gene expression through the process of active DNA demethylation. This chain is C-&gt;U-editing enzyme APOBEC-2 (Apobec2), found in Mus musculus (Mouse).